Consider the following 57-residue polypeptide: Small ribosomal subunit protein eS31 (57 aa).

4 residues coordinate Zn(2+): cysteine 29, cysteine 32, cysteine 47, and cysteine 50. The C4-type zinc-finger motif lies at 29 to 50; sequence CPRCGPGVFMANHKDRWSCGRC.

The protein belongs to the eukaryotic ribosomal protein eS31 family. In terms of assembly, part of the 30S ribosomal subunit. Requires Zn(2+) as cofactor.

The sequence is that of Small ribosomal subunit protein eS31 from Thermococcus kodakarensis (strain ATCC BAA-918 / JCM 12380 / KOD1) (Pyrococcus kodakaraensis (strain KOD1)).